Here is a 494-residue protein sequence, read N- to C-terminus: MAKDQKKQPRPKAETPKGFRDYFGADVTERKQMLDRIAQIYHRHGFEPLETSAVETVEALGKFLPDVDRPNAGVFAWQEAEVPGGGAGDWLALRYDLTAPLARVAAQFRGDLPSPYRRYAMGPVWRNEKPGPGRFRQFYQCDADTVGSASVAADAEICAMLAAALEHAGIRRGDYLIRINNRKVLNGILESMGVAEGKPADDVLRTIDKFDKVGEQGVRQLLTTGRKDESGAFIEGVGLSPEQAEPVLAFLTSKGADNAGTLANLRAAVGASATGAEGVEELAQIARMLAAMGVGEERAIVDPSIVRGLGYYTGPVFEAELTFEILDDKGRKRQFGSVAGGGRYDGLVERFTGQKVPATGVSIGVDRLLAALRAKGLMGGTEQGPVVVTVMDRERMADYQAMAAELRAAGIRAEVYLGNPKNFGNQLKYADKRNAPVAIIQGGDEAARGVVQVKDLVLGAKIAAEASHEEWKAQPAQTEVARADLVAEVRRILG.

Residues 1–20 (MAKDQKKQPRPKAETPKGFR) form a disordered region.

This sequence belongs to the class-II aminoacyl-tRNA synthetase family. Homodimer.

The protein localises to the cytoplasm. It catalyses the reaction tRNA(His) + L-histidine + ATP = L-histidyl-tRNA(His) + AMP + diphosphate + H(+). This Paracoccus denitrificans (strain Pd 1222) protein is Histidine--tRNA ligase.